A 225-amino-acid chain; its full sequence is Enolase-phosphatase E1 (225 aa).

The protein belongs to the HAD-like hydrolase superfamily. MasA/MtnC family. As to quaternary structure, monomer. Requires Mg(2+) as cofactor.

It catalyses the reaction 5-methylsulfanyl-2,3-dioxopentyl phosphate + H2O = 1,2-dihydroxy-5-(methylsulfanyl)pent-1-en-3-one + phosphate. Its pathway is amino-acid biosynthesis; L-methionine biosynthesis via salvage pathway; L-methionine from S-methyl-5-thio-alpha-D-ribose 1-phosphate: step 3/6. It functions in the pathway amino-acid biosynthesis; L-methionine biosynthesis via salvage pathway; L-methionine from S-methyl-5-thio-alpha-D-ribose 1-phosphate: step 4/6. Its function is as follows. Bifunctional enzyme that catalyzes the enolization of 2,3-diketo-5-methylthiopentyl-1-phosphate (DK-MTP-1-P) into the intermediate 2-hydroxy-3-keto-5-methylthiopentenyl-1-phosphate (HK-MTPenyl-1-P), which is then dephosphorylated to form the acireductone 1,2-dihydroxy-3-keto-5-methylthiopentene (DHK-MTPene). The protein is Enolase-phosphatase E1 of Shewanella halifaxensis (strain HAW-EB4).